Consider the following 277-residue polypeptide: Proteasome subunit beta type-7 (277 aa).

Positions 1-43 (MAAVSVFQAPVGGFSFDNCRRNAVLEADFAKKGFKLPKARKTG) are cleaved as a propeptide — removed in mature form. The Nucleophile role is filled by T44.

This sequence belongs to the peptidase T1B family. As to quaternary structure, the 26S proteasome consists of a 20S proteasome core and two 19S regulatory subunits. The 20S proteasome core is a barrel-shaped complex made of 28 subunits that are arranged in four stacked rings. The two outer rings are each formed by seven alpha subunits, and the two inner rings are formed by seven beta subunits. The proteolytic activity is exerted by three beta-subunits PSMB5, PSMB6 and PSMB7.

The protein localises to the cytoplasm. It is found in the nucleus. The enzyme catalyses Cleavage of peptide bonds with very broad specificity.. Functionally, component of the 20S core proteasome complex involved in the proteolytic degradation of most intracellular proteins. This complex plays numerous essential roles within the cell by associating with different regulatory particles. Associated with two 19S regulatory particles, forms the 26S proteasome and thus participates in the ATP-dependent degradation of ubiquitinated proteins. The 26S proteasome plays a key role in the maintenance of protein homeostasis by removing misfolded or damaged proteins that could impair cellular functions, and by removing proteins whose functions are no longer required. Associated with the PA200 or PA28, the 20S proteasome mediates ubiquitin-independent protein degradation. This type of proteolysis is required in several pathways including spermatogenesis (20S-PA200 complex) or generation of a subset of MHC class I-presented antigenic peptides (20S-PA28 complex). Within the 20S core complex, PSMB7 displays a trypsin-like activity. The sequence is that of Proteasome subunit beta type-7 (Psmb7) from Rattus norvegicus (Rat).